The sequence spans 176 residues: dCTP deaminase (176 aa).

Residues 99-104 (RSTLAR) and Asp-115 each bind dCTP. Catalysis depends on Glu-125, which acts as the Proton donor/acceptor. Gln-163 is a binding site for dCTP.

It belongs to the dCTP deaminase family. Homotrimer.

It carries out the reaction dCTP + H2O + H(+) = dUTP + NH4(+). The protein operates within pyrimidine metabolism; dUMP biosynthesis; dUMP from dCTP (dUTP route): step 1/2. Functionally, catalyzes the deamination of dCTP to dUTP. This chain is dCTP deaminase, found in Pyrobaculum neutrophilum (strain DSM 2338 / JCM 9278 / NBRC 100436 / V24Sta) (Thermoproteus neutrophilus).